The following is a 258-amino-acid chain: UPF0246 protein HS_0482 (258 aa).

This sequence belongs to the UPF0246 family.

In Histophilus somni (strain 129Pt) (Haemophilus somnus), this protein is UPF0246 protein HS_0482.